A 393-amino-acid polypeptide reads, in one-letter code: Branched-chain-amino-acid aminotransferase, mitochondrial (393 aa).

The N-terminal 27 residues, 1 to 27 (MATAALRQIWIPRFLPVPWFLCGSRRY), are a transit peptide targeting the mitochondrion. Position 169 (tyrosine 169) interacts with substrate. Lysine 230 carries the post-translational modification N6-(pyridoxal phosphate)lysine. An N6-acetyllysine modification is found at lysine 322.

It belongs to the class-IV pyridoxal-phosphate-dependent aminotransferase family. Homodimer. Requires pyridoxal 5'-phosphate as cofactor.

Its subcellular location is the mitochondrion. The catalysed reaction is L-leucine + 2-oxoglutarate = 4-methyl-2-oxopentanoate + L-glutamate. It carries out the reaction L-isoleucine + 2-oxoglutarate = (S)-3-methyl-2-oxopentanoate + L-glutamate. It catalyses the reaction L-valine + 2-oxoglutarate = 3-methyl-2-oxobutanoate + L-glutamate. In terms of biological role, catalyzes the first reaction in the catabolism of the essential branched chain amino acids leucine, isoleucine, and valine. May also function as a transporter of branched chain alpha-keto acids. This is Branched-chain-amino-acid aminotransferase, mitochondrial (BCAT2) from Bos taurus (Bovine).